The sequence spans 189 residues: Peptidyl-tRNA hydrolase (189 aa).

TRNA is bound at residue tyrosine 14. The active-site Proton acceptor is the histidine 19. Tyrosine 64, asparagine 66, and asparagine 112 together coordinate tRNA.

Belongs to the PTH family. As to quaternary structure, monomer.

It localises to the cytoplasm. The catalysed reaction is an N-acyl-L-alpha-aminoacyl-tRNA + H2O = an N-acyl-L-amino acid + a tRNA + H(+). Its function is as follows. Hydrolyzes ribosome-free peptidyl-tRNAs (with 1 or more amino acids incorporated), which drop off the ribosome during protein synthesis, or as a result of ribosome stalling. In terms of biological role, catalyzes the release of premature peptidyl moieties from peptidyl-tRNA molecules trapped in stalled 50S ribosomal subunits, and thus maintains levels of free tRNAs and 50S ribosomes. In Dehalococcoides mccartyi (strain ATCC BAA-2266 / KCTC 15142 / 195) (Dehalococcoides ethenogenes (strain 195)), this protein is Peptidyl-tRNA hydrolase.